The following is a 310-amino-acid chain: Transcription initiation factor IIA subunit 1 (310 aa).

Disordered regions lie at residues 52–78, 91–197, and 218–261; these read AISN…LSTV, IQLN…NNKD, and VIPQ…DDPD. Low complexity-rich tracts occupy residues 62–77 and 122–160; these read TTAT…TLST and SNGT…PSSL. Composition is skewed to acidic residues over residues 173–183, 225–236, and 246–261; these read TLDESDNDDDN, LNDDDDLDDEEI, and DSLG…DDPD.

Belongs to the TFIIA subunit 1 family. As to quaternary structure, TFIIA is a heterodimer of the large subunit 1 and a small subunit gamma.

The protein resides in the nucleus. TFIIA is a component of the transcription machinery of RNA polymerase II and plays an important role in transcriptional activation. TFIIA in a complex with tbp mediates transcriptional activity. This Dictyostelium discoideum (Social amoeba) protein is Transcription initiation factor IIA subunit 1 (gtf2a1).